The following is a 584-amino-acid chain: MPQLGGGRGGAGGGGGGSGAGATSGGDDLGANDELIPFQDEGGEEQEPSSDTASAQRDLDEVKSSLVNESENQSSSSDSEAERRPQPARDAFQKPRDYFAEVRRPQDGAFFKGGAYPGYPFLMIPDLSSPYLSNGPLSPGGARTYLQMKWPLLDVPSSATVKDTRSPSPAHLSNKVPVVQHPHHMHPLTPLITYSNDHFSPASPPTHLSPEIDPKTGIPRPPHPSELSPYYPLSPGAVGQIPHPLGWLVPQQGQPMYSLPPGGFRHPYPALAMNASMSSLVSSRFPHMVAPAHPGLPTSGIPHPAIVSPIVKQEPAAPSLSPAVSAKSPVTVKKEEEKKPHVKKPLNAFMLYMKEMRAKVVAECTLKESAAINQILGRKWHNLSREEQAKYYELARKERQLHAQLYPTWSARDNYGKKKKRKREKQLSQTQSQQQIQEAEGALASKSKKPCIQYLPPEKPCDSPASSHGSALDSPATPSAALASPAAPAATHSEQAQPLSLTTKPEARAQLALHSAAFLSAKAAASNSSQMGSQPPLLSRPLPLGSMPAALLTSPPTFPATLHAHQALPVLQAQPLSLVTKSAH.

The span at 1-28 (MPQLGGGRGGAGGGGGGSGAGATSGGDD) shows a compositional bias: gly residues. The segment at 1 to 71 (MPQLGGGRGG…VKSSLVNESE (71 aa)) is CTNNB1-binding. Disordered stretches follow at residues 1–99 (MPQL…RDYF), 159–179 (ATVK…VPVV), and 194–231 (YSND…SPYY). The span at 64–78 (SSLVNESENQSSSSD) shows a compositional bias: low complexity. Basic and acidic residues predominate over residues 80 to 99 (EAERRPQPARDAFQKPRDYF). A DNA-binding region (HMG box) is located at residues 342-410 (VKKPLNAFML…LHAQLYPTWS (69 aa)). The disordered stretch occupies residues 412–501 (RDNYGKKKKR…HSEQAQPLSL (90 aa)). Positions 417–423 (KKKKRKR) match the Nuclear localization signal motif. 2 stretches are compositionally biased toward low complexity: residues 427 to 437 (LSQTQSQQQIQ) and 470 to 491 (SALD…PAAT). The span at 492-501 (HSEQAQPLSL) shows a compositional bias: polar residues.

It belongs to the TCF/LEF family. Binds the armadillo repeat of CTNNB1 and forms a stable complex. Interacts with DAZAP2. In terms of tissue distribution, detected in the basal layer of epidermis and in outer root sheath and bulge of hair follicles.

It is found in the nucleus. Participates in the Wnt signaling pathway. Binds to DNA and acts as a repressor in the absence of CTNNB1, and as an activator in its presence. Necessary for the terminal differentiation of epidermal cells, the formation of keratohyalin granules and the development of the barrier function of the epidermis. The protein is Transcription factor 7-like 1 (Tcf7l1) of Mus musculus (Mouse).